A 716-amino-acid chain; its full sequence is Zinc finger protein 840 (716 aa).

Residues 42-113 (VRFRDVAVVF…EREVTGDPCP (72 aa)) enclose the KRAB domain. C2H2-type zinc fingers lie at residues 151-173 (YECD…QKIH), 207-229 (FECN…QSMH), 235-257 (YKCD…QRFH), 277-299 (FSCN…LLIH), 305-327 (YTCN…QRTH), 333-355 (HKCD…QKTH), 361-383 (FSCN…QQIH), 389-411 (FICS…KGTH), 417-439 (YQCT…QKTH), 445-467 (FACN…KKIH), 473-495 (YECG…KKIH), 501-523 (FVCN…QRTH), 549-571 (FPCN…QQIH), 577-599 (FICS…KGTH), 605-627 (YQCT…QKTH), 633-655 (FTCN…KKIH), 661-683 (YECG…KKIH), and 689-711 (FVCN…QITH). A disordered region spans residues 515-548 (KLSRHQRTHNKKENSSKSVSNLNKHQKTHAGEKP).

The protein belongs to the krueppel C2H2-type zinc-finger protein family.

The protein localises to the nucleus. May be involved in transcriptional regulation. The polypeptide is Zinc finger protein 840 (ZNF840P) (Homo sapiens (Human)).